Consider the following 695-residue polypeptide: MSGGEVVCSGWLRKSPPEKKLKRYAWKRRWFVLRSGRLTGDPDVLEYYKNDHAKKPIRIIDLNLCQQVDAGLTFNKKEFENSYIFDINTIDRIFYLVADSEEDMNKWVRCICDICGFNPTEEDPVKPLTGSSQAPVDSPFAISTAPASSQMEASSVALPPPYQVISLPPHPDTLGLQDDPQDYLLLINCQSKKPEPNRTLFDSAKPTFSETDCNDNVPSHQTPASSQSKHGMNGFFQQQMMYDCPPSRLTSVSGESSLYNLPRSYSHDVLPKESPSSTEADGELYTFNTPSGTAGVETQMRHVSISYDIPPTPGNTYQIPRTFPESTLGQSSKLDTIPDIPPPRPPKPHPTHDRSPVETCGVPRTASDTDSSYCIPPPAGMTPSRSNTISTVDLNKLRKDASSQDCYDIPRTFPSDRSSSLEGFHSQYKIKSVLTAGGVSGEELDENYVPMNPNSPPRQHSGSFTEPIQEPNYVPMTPGTFDFSSFGMQVPPPAHMGFRSSPKTPPRRPVPVADCEPPPVDRNLKPDRKVKPAPLDIKPLSEWEELQAPVRSPITRSFARDSSRFPMSPRPDSVHSTTSSSDSHDSEENYVPMNPNLSGEDPNLFASNSLDGGSSPMNKPKGDKQVEYLDLDLDSGKSTPPRKQKSSGSGSSMADERVDYVVVDQQKTLALKSTREAWTDGRQSTESETPTKNVK.

S2 is modified (N-acetylserine). A PH domain is found at 5–116 (EVVCSGWLRK…WVRCICDICG (112 aa)). The tract at residues 204–229 (AKPTFSETDCNDNVPSHQTPASSQSK) is disordered. Residues 206-229 (PTFSETDCNDNVPSHQTPASSQSK) are compositionally biased toward polar residues. A phosphoserine mark is found at S251, S253, S266, and S304. The disordered stretch occupies residues 306–387 (SYDIPPTPGN…PAGMTPSRSN (82 aa)). Polar residues predominate over residues 314 to 334 (GNTYQIPRTFPESTLGQSSKL). Phosphothreonine is present on T388. Phosphoserine is present on residues S403 and S455. The tract at residues 453–659 (PNSPPRQHSG…GSSMADERVD (207 aa)) is disordered. Composition is skewed to polar residues over residues 457 to 466 (PRQHSGSFTE) and 605 to 617 (FASN…SSPM). Y628 bears the Phosphotyrosine mark. T639 bears the Phosphothreonine mark. The residue at position 652 (S652) is a Phosphoserine. Phosphotyrosine is present on Y660. A disordered region spans residues 671 to 695 (LKSTREAWTDGRQSTESETPTKNVK). Over residues 673 to 685 (STREAWTDGRQST) the composition is skewed to basic and acidic residues. S684 carries the post-translational modification Phosphoserine. A compositionally biased stretch (polar residues) spans 686 to 695 (ESETPTKNVK).

It belongs to the GAB family. Identified in a complex containing FRS2, GRB2, GAB1, PIK3R1 and SOS1. Forms a tripartite complex containing GAB1, METTL13 and SPRY2. Within the complex interacts with METTL13. Interacts with GRB2 and with other SH2-containing proteins. Interacts with phosphorylated LAT2. Interacts with PTPRJ. Interacts (phosphorylated) with PTPN11. Interacts with HCK. In terms of processing, phosphorylated on tyrosine residue(s) by the epidermal growth factor receptor (EGFR) and the insulin receptor (INSR). Tyrosine phosphorylation of GAB1 mediates interaction with several proteins that contain SH2 domains. Phosphorylated on tyrosine residues by HCK upon IL6 signaling. Phosphorylated in response to FGFR1 activation. In terms of tissue distribution, expressed in the inner ear (at protein level). Expression is detected in the cochlear duct, spiral limbus region, efferent and afferent nerves, and in spiral ganglion neurons (at protein level).

Functionally, adapter protein that plays a role in intracellular signaling cascades triggered by activated receptor-type kinases. Plays a role in FGFR1 signaling. Probably involved in signaling by the epidermal growth factor receptor (EGFR) and the insulin receptor (INSR). Involved in the MET/HGF-signaling pathway. This chain is GRB2-associated-binding protein 1 (Gab1), found in Mus musculus (Mouse).